Consider the following 371-residue polypeptide: F-box protein At2g26850 (371 aa).

Positions 59–105 constitute an F-box domain; the sequence is KMSILDLPDLPLDCILELLPPSELCTMARVCSSLRERCVSDHLWEKH.

This chain is F-box protein At2g26850, found in Arabidopsis thaliana (Mouse-ear cress).